The sequence spans 438 residues: Coenzyme A disulfide reductase (438 aa).

An FAD-binding site is contributed by 8-33 (GAVAGGATCASQIRRLDKESDIIIFE). Positions 15, 19, 22, 39, and 42 each coordinate substrate. The active-site Nucleophile is the cysteine 43. Cysteine 43 acts as the Redox-active in catalysis. Residue lysine 71 participates in substrate binding. 151-166 (VLVIGAGYVSLEVLEN) provides a ligand contact to NADP(+). An FAD-binding site is contributed by 267–277 (TNVPNIYAIGD). Histidine 299 provides a ligand contact to substrate. Position 419 (tyrosine 419) interacts with FAD. Residue lysine 427 coordinates substrate.

Belongs to the class-III pyridine nucleotide-disulfide oxidoreductase family. In terms of assembly, homodimer. FAD serves as cofactor.

It catalyses the reaction NADP(+) + 2 CoA = CoA-disulfide + NADPH + H(+). Its function is as follows. Catalyzes specifically the NADPH-dependent reduction of coenzyme A disulfide. The chain is Coenzyme A disulfide reductase from Staphylococcus aureus (strain JH1).